The sequence spans 216 residues: Sperm microtubule inner protein 8 (216 aa).

Microtubule inner protein component of sperm flagellar doublet microtubules. Expressed in sperm.

The protein resides in the cytoplasm. It localises to the cytoskeleton. Its subcellular location is the flagellum axoneme. Its function is as follows. Microtubule inner protein (MIP) part of the dynein-decorated doublet microtubules (DMTs) in flagellum axoneme. May serve to reinforce and thus stabilize the microtubule structure in the sperm flagella. The polypeptide is Sperm microtubule inner protein 8 (SPMIP8) (Bos taurus (Bovine)).